The following is a 333-amino-acid chain: Protein farnesyltransferase/geranylgeranyltransferase type-1 subunit alpha (333 aa).

PFTA repeat units follow at residues Leu61–Val95, Asp96–Pro130, Ala132–Gly166, Trp167–Val200, and Met207–Thr241.

The protein belongs to the protein prenyltransferase subunit alpha family. As to quaternary structure, heterodimer of FTA and FTB (farnesyltransferase). Heterodimer of an alpha and a beta subunit. Mg(2+) is required as a cofactor.

It catalyses the reaction L-cysteinyl-[protein] + (2E,6E)-farnesyl diphosphate = S-(2E,6E)-farnesyl-L-cysteinyl-[protein] + diphosphate. It carries out the reaction geranylgeranyl diphosphate + L-cysteinyl-[protein] = S-geranylgeranyl-L-cysteinyl-[protein] + diphosphate. Functionally, essential subunit of both the farnesyltransferase and the geranylgeranyltransferase complex. Contributes to the transfer of a farnesyl or geranylgeranyl moiety from farnesyl or geranylgeranyl diphosphate to a cysteine at the fourth position from the C-terminus of several proteins having the C-terminal sequence Cys-aliphatic-aliphatic-X. In Pisum sativum (Garden pea), this protein is Protein farnesyltransferase/geranylgeranyltransferase type-1 subunit alpha (FTA).